Reading from the N-terminus, the 324-residue chain is 26S proteasome non-ATPase regulatory subunit 7 (324 aa).

Positions 9 to 144 (VVVHPLVLLS…TEAYISVEEV (136 aa)) constitute an MPN domain. Lys-180 participates in a covalent cross-link: Glycyl lysine isopeptide (Lys-Gly) (interchain with G-Cter in ubiquitin). Residues Lys-204, Lys-214, Lys-316, and Lys-317 each carry the N6-acetyllysine modification. The tract at residues 281–324 (ANRDAEKKEGQEKEESKKDRKEDKEKDKDKEKSDVKKEEKKEKK) is disordered.

Belongs to the peptidase M67A family. Component of the 19S proteasome regulatory particle complex. The 26S proteasome consists of a 20S core particle (CP) and two 19S regulatory subunits (RP). The regulatory particle is made of a lid composed of 9 subunits including PSMD7, a base containing 6 ATPases and few additional components. Within the complex, PSMD7 interacts with subunit PSMD4 through their respective MPN domain. Interacts with TRIM5.

Its function is as follows. Component of the 26S proteasome, a multiprotein complex involved in the ATP-dependent degradation of ubiquitinated proteins. This complex plays a key role in the maintenance of protein homeostasis by removing misfolded or damaged proteins, which could impair cellular functions, and by removing proteins whose functions are no longer required. Therefore, the proteasome participates in numerous cellular processes, including cell cycle progression, apoptosis, or DNA damage repair. The chain is 26S proteasome non-ATPase regulatory subunit 7 (PSMD7) from Homo sapiens (Human).